Consider the following 375-residue polypeptide: Growth/differentiation factor 8 (375 aa).

An N-terminal signal peptide occupies residues 1–18 (MQKLQIFVYIYLFVLIVA). Positions 19 to 266 (GPVDLNENSE…VTDTPKRSRR (248 aa)) are excised as a propeptide. N-linked (GlcNAc...) asparagine glycans are attached at residues N48 and N71. 4 disulfide bridges follow: C272-C282, C281-C340, C309-C372, and C313-C374.

This sequence belongs to the TGF-beta family. In terms of assembly, homodimer; disulfide-linked. Interacts with WFIKKN2, leading to inhibit its activity. Interacts with FSTL3. Synthesized as large precursor molecule that undergoes proteolytic cleavage to generate an N-terminal propeptide and a disulfide linked C-terminal dimer, which is the biologically active molecule. The circulating form consists of a latent complex of the C-terminal dimer and other proteins, including its propeptide, which maintain the C-terminal dimer in a latent, inactive state. Ligand activation requires additional cleavage of the prodomain by a tolloid-like metalloproteinase.

The protein resides in the secreted. Its function is as follows. Acts specifically as a negative regulator of skeletal muscle growth. The chain is Growth/differentiation factor 8 (MSTN) from Aepyceros melampus (Impala).